Consider the following 221-residue polypeptide: CDP-diacylglycerol--glycerol-3-phosphate 3-phosphatidyltransferase (221 aa).

5 consecutive transmembrane segments (helical) span residues 8 to 28 (ILTV…LYFH), 34 to 54 (WFAL…GYLA), 75 to 95 (MVVI…WLIL), 133 to 153 (AQMV…LEGI), and 187 to 207 (ATWL…ITGW).

The protein belongs to the CDP-alcohol phosphatidyltransferase class-I family.

It is found in the cell membrane. The catalysed reaction is a CDP-1,2-diacyl-sn-glycerol + sn-glycerol 3-phosphate = a 1,2-diacyl-sn-glycero-3-phospho-(1'-sn-glycero-3'-phosphate) + CMP + H(+). It functions in the pathway phospholipid metabolism; phosphatidylglycerol biosynthesis; phosphatidylglycerol from CDP-diacylglycerol: step 1/2. Functionally, this protein catalyzes the committed step to the synthesis of the acidic phospholipids. The protein is CDP-diacylglycerol--glycerol-3-phosphate 3-phosphatidyltransferase (pgsA) of Cereibacter sphaeroides (strain ATCC 17023 / DSM 158 / JCM 6121 / CCUG 31486 / LMG 2827 / NBRC 12203 / NCIMB 8253 / ATH 2.4.1.) (Rhodobacter sphaeroides).